The following is a 98-amino-acid chain: Aspartyl/glutamyl-tRNA(Asn/Gln) amidotransferase subunit C (98 aa).

Belongs to the GatC family. As to quaternary structure, heterotrimer of A, B and C subunits.

The enzyme catalyses L-glutamyl-tRNA(Gln) + L-glutamine + ATP + H2O = L-glutaminyl-tRNA(Gln) + L-glutamate + ADP + phosphate + H(+). It carries out the reaction L-aspartyl-tRNA(Asn) + L-glutamine + ATP + H2O = L-asparaginyl-tRNA(Asn) + L-glutamate + ADP + phosphate + 2 H(+). Its function is as follows. Allows the formation of correctly charged Asn-tRNA(Asn) or Gln-tRNA(Gln) through the transamidation of misacylated Asp-tRNA(Asn) or Glu-tRNA(Gln) in organisms which lack either or both of asparaginyl-tRNA or glutaminyl-tRNA synthetases. The reaction takes place in the presence of glutamine and ATP through an activated phospho-Asp-tRNA(Asn) or phospho-Glu-tRNA(Gln). The protein is Aspartyl/glutamyl-tRNA(Asn/Gln) amidotransferase subunit C of Acidothermus cellulolyticus (strain ATCC 43068 / DSM 8971 / 11B).